Consider the following 246-residue polypeptide: ABC transporter ATP-binding protein NatA (246 aa).

The region spanning 2 to 237 (ITLTDCSRRF…ERSEDLNYIF (236 aa)) is the ABC transporter domain. Position 38 to 45 (38 to 45 (GENGAGKT)) interacts with ATP.

This sequence belongs to the ABC transporter superfamily. The complex is composed of NatA and NatB.

The enzyme catalyses Na(+)(in) + ATP + H2O = Na(+)(out) + ADP + phosphate + H(+). In terms of biological role, part of an ABC transporter that catalyzes ATP-dependent electrogenic sodium extrusion. The polypeptide is ABC transporter ATP-binding protein NatA (Bacillus subtilis (strain 168)).